Here is a 125-residue protein sequence, read N- to C-terminus: Protein MGF 360-9L (125 aa).

This sequence belongs to the asfivirus MGF 360 family. In terms of assembly, interacts with host STAT1; this interaction mediates STAT1 degradation through apoptosis. Interacts with host STAT2; this interaction mediates STAT2 degradation through the proteasome.

The protein localises to the host cytoplasm. Functionally, plays a role in virus cell tropism, and may be required for efficient virus replication in macrophages. In addition, inhibits IFN-beta-induced IFN-stimulated genes (ISGs) transcription. Mechanistically, degrades host STAT1 and STAT2 through apoptosis and ubiquitin-proteasome pathways respectively. The sequence is that of Protein MGF 360-9L from African swine fever virus (strain Badajoz 1971 Vero-adapted) (Ba71V).